The following is a 252-amino-acid chain: HTH-type transcriptional regulator XynR (252 aa).

In terms of domain architecture, HTH iclR-type spans 4–66 (IQSVERALQI…PENGKYRLGM (63 aa)). A DNA-binding region (H-T-H motif) is located at residues 25-45 (KITDISKLMGLSKSTLHSLLK). The 170-residue stretch at 81–250 (IRQKAKGWLT…GLALSRALGY (170 aa)) folds into the IclR-ED domain.

Activity may be controlled by xylonate. Involved in regulation of xylonate catabolism. Represses the expression of both yagA and yagEF operons. Binds mainly at a single site within the spacer of the bidirectional transcription units yagA and yagEF. This is HTH-type transcriptional regulator XynR from Escherichia coli (strain K12).